Consider the following 263-residue polypeptide: uncharacterized protein (263 aa).

The N-terminal stretch at 1–22 is a signal peptide; the sequence is MEYLKRLALLISVIILTIFIMG. Cys23 carries N-palmitoyl cysteine lipidation. Cys23 carries S-diacylglycerol cysteine lipidation.

This sequence belongs to the staphylococcal tandem lipoprotein family.

Its subcellular location is the cell membrane. This is an uncharacterized protein from Staphylococcus aureus (strain USA300).